Consider the following 214-residue polypeptide: Guanylate kinase (214 aa).

The 187-residue stretch at 6 to 192 (GTLYIISAPS…ALEDLKSIFR (187 aa)) folds into the Guanylate kinase-like domain. 13–20 (APSGAGKT) contributes to the ATP binding site.

The protein belongs to the guanylate kinase family.

It is found in the cytoplasm. The catalysed reaction is GMP + ATP = GDP + ADP. Essential for recycling GMP and indirectly, cGMP. This Pseudomonas syringae pv. tomato (strain ATCC BAA-871 / DC3000) protein is Guanylate kinase.